Consider the following 213-residue polypeptide: Putative manganese efflux pump MntP (213 aa).

Helical transmembrane passes span 3–23 (ILSI…VSVA), 36–56 (ALKV…IGWG), 67–87 (AFDH…MIFE), 130–150 (LAIA…FLGI), 152–172 (IVQT…LGVI), and 187–207 (IVGG…HTGI).

This sequence belongs to the MntP (TC 9.B.29) family.

The protein resides in the cell membrane. In terms of biological role, probably functions as a manganese efflux pump. In Clostridium perfringens (strain ATCC 13124 / DSM 756 / JCM 1290 / NCIMB 6125 / NCTC 8237 / Type A), this protein is Putative manganese efflux pump MntP.